Here is a 419-residue protein sequence, read N- to C-terminus: E3 ubiquitin-protein ligase pellino homolog 2 (419 aa).

Residues 15-202 (EPVKYRELVV…HPQGGFTEES (188 aa)) form the FHA; atypical domain.

Belongs to the pellino family. In terms of assembly, interacts with TRAF6, IRAK4 and MAP3K7. Interacts with IRAK1. Interacts with BCL10; this interaction is impaired by SOCS3. Phosphorylated by IRAK1 and IRAK4 enhancing its E3 ligase activity. Widely expressed both in embryos and adult. Weakly or not expressed in spleen and thymus.

The enzyme catalyses S-ubiquitinyl-[E2 ubiquitin-conjugating enzyme]-L-cysteine + [acceptor protein]-L-lysine = [E2 ubiquitin-conjugating enzyme]-L-cysteine + N(6)-ubiquitinyl-[acceptor protein]-L-lysine.. It participates in protein modification; protein ubiquitination. E3 ubiquitin ligase catalyzing the covalent attachment of ubiquitin moieties onto substrate proteins. Involved in the TLR and IL-1 signaling pathways via interaction with the complex containing IRAK kinases and TRAF6. Mediates IL1B-induced IRAK1 'Lys-63'-linked polyubiquitination and possibly 'Lys-48'-linked ubiquitination. May be important for LPS- and IL1B-induced MAP3K7-dependent, but not MAP3K3-dependent, NF-kappa-B activation. Can activate the MAP (mitogen activated protein) kinase pathway leading to activation of ELK1. In Mus musculus (Mouse), this protein is E3 ubiquitin-protein ligase pellino homolog 2 (Peli2).